A 312-amino-acid polypeptide reads, in one-letter code: Aspartate carbamoyltransferase catalytic subunit (312 aa).

Carbamoyl phosphate-binding residues include arginine 58 and threonine 59. Residue lysine 86 participates in L-aspartate binding. The carbamoyl phosphate site is built by arginine 108, histidine 136, and glutamine 139. L-aspartate-binding residues include arginine 169 and arginine 223. Glycine 264 and proline 265 together coordinate carbamoyl phosphate.

Belongs to the aspartate/ornithine carbamoyltransferase superfamily. ATCase family. As to quaternary structure, heterododecamer (2C3:3R2) of six catalytic PyrB chains organized as two trimers (C3), and six regulatory PyrI chains organized as three dimers (R2).

The catalysed reaction is carbamoyl phosphate + L-aspartate = N-carbamoyl-L-aspartate + phosphate + H(+). It functions in the pathway pyrimidine metabolism; UMP biosynthesis via de novo pathway; (S)-dihydroorotate from bicarbonate: step 2/3. In terms of biological role, catalyzes the condensation of carbamoyl phosphate and aspartate to form carbamoyl aspartate and inorganic phosphate, the committed step in the de novo pyrimidine nucleotide biosynthesis pathway. The sequence is that of Aspartate carbamoyltransferase catalytic subunit from Heliobacterium modesticaldum (strain ATCC 51547 / Ice1).